The chain runs to 299 residues: Probable alpha-L-glutamate ligase (299 aa).

One can recognise an ATP-grasp domain in the interval 111–293 (LQALAAANIA…VATQMIAYLE (183 aa)). Residues lysine 147, 184-185 (DF), aspartate 193, and 217-219 (RAN) contribute to the ATP site. Mg(2+) is bound by residues aspartate 254, glutamate 266, and asparagine 268. The Mn(2+) site is built by aspartate 254, glutamate 266, and asparagine 268.

Belongs to the RimK family. The cofactor is Mg(2+). Mn(2+) is required as a cofactor.

The chain is Probable alpha-L-glutamate ligase from Mannheimia succiniciproducens (strain KCTC 0769BP / MBEL55E).